A 525-amino-acid polypeptide reads, in one-letter code: MSSIEQVNEVFDTILVLDFGSQYSHLITRRLREFNIYAEMLPCTQKIADLHFKPKGVIMSGGPYSVYAEDAPHVDHAIFDLGVPILGICYGMQELAWINGKQVARGEKREYGPATLNVLDKEDALFKNVDHSTVWMSHGDKLHGLPTGFKVIATSDNSPYCGIVHESKQIYGIQFHPEVTHSSNGKTLLKNFAVDLCHAKQNWTMKNFIGTEVQRIRDLVGPTAEVIGAVSGGVDSTVASKLMTEAIGDRFHAILVDNGVLRLNEAATVKKTLVDGLGINLTVVDAADEFLDNLKGVTDPEKKRKIIGNTFIHVFEREAEKIKPKDGKAIEFLLQGTLYPDVIESISFKGPSQTIKTHHNVGGLLENMKLKLIEPLRELFKDEVRELGELLGISHELVWRHPFPGPGIAIRVLGEVTREQVEIARKADHIYIEEIRKAGLYDKISQAFACLLPVKSVGVMGDQRTYEQVIALRAIETTDFMTADWYPFEHSFLRKVASRIVNEVDGVARVTYDITSKPPATVEWE.

Positions 13 to 202 constitute a Glutamine amidotransferase type-1 domain; it reads TILVLDFGSQ…AVDLCHAKQN (190 aa). Cys-89 acts as the Nucleophile in catalysis. Catalysis depends on residues His-176 and Glu-178. The GMPS ATP-PPase domain maps to 203–400; the sequence is WTMKNFIGTE…LGISHELVWR (198 aa). 231 to 237 contacts ATP; the sequence is SGGVDST. 4 residues coordinate XMP: Arg-304, Asp-462, Lys-517, and Glu-523.

In terms of assembly, homodimer. Requires Mg(2+) as cofactor.

The protein localises to the cytoplasm. Its subcellular location is the cytosol. It catalyses the reaction XMP + L-glutamine + ATP + H2O = GMP + L-glutamate + AMP + diphosphate + 2 H(+). It participates in purine metabolism; GMP biosynthesis; GMP from XMP (L-Gln route): step 1/1. Catalyzes the conversion of xanthine monophosphate (XMP) to GMP in the presence of glutamine and ATP through an adenyl-XMP intermediate. The polypeptide is GMP synthase [glutamine-hydrolyzing] (GUA1) (Candida glabrata (strain ATCC 2001 / BCRC 20586 / JCM 3761 / NBRC 0622 / NRRL Y-65 / CBS 138) (Yeast)).